The chain runs to 454 residues: MEIKQVFEQNSELIDQEIELIARVRSNRQGKFVSFMILNDGTTFTDLQVVYKTKTKGYEQALQARVSSIVKVIGRVVLTPEKQQKFEVQADAIELIDQAIEDYPLQKKEHTTEYLREIAHLRAKTKTFNAIFKIRSAAAYAIHKFFNDRGFVYIHSPIITSNDAEGAGEAFLVTTREDADYEKDFFAKKASLTVSGQLHAEAFAQAFKKVYTFGPTFRAENSNTAKHAAEFWMIEPEVAFADLKDNIQLIQDMVKYIINYIFKHNRRELEFCNEHLEDGLIDKLNSVRNSEFKVTTYTEAIEILKQAVANGHKFEVSDIEFGLDLGTEHERYICEQVNKAPTFVTNYPKEIKAFYMKQNEDNKTVAAVDLLVPGIGELVGGSQREDNYEKLIKRCKEVNIDIDQLEWYNNLRLYGYYKSAGFGLGFERLIMYITGASNIRDVIPFPRTPKNLLF.

This sequence belongs to the class-II aminoacyl-tRNA synthetase family. In terms of assembly, homodimer.

Its subcellular location is the cytoplasm. The catalysed reaction is tRNA(Asn) + L-asparagine + ATP = L-asparaginyl-tRNA(Asn) + AMP + diphosphate + H(+). The polypeptide is Asparagine--tRNA ligase (Mycoplasma capricolum subsp. capricolum (strain California kid / ATCC 27343 / NCTC 10154)).